The following is a 564-amino-acid chain: Proline--tRNA ligase (564 aa).

The protein belongs to the class-II aminoacyl-tRNA synthetase family. ProS type 1 subfamily. Homodimer.

It localises to the cytoplasm. The catalysed reaction is tRNA(Pro) + L-proline + ATP = L-prolyl-tRNA(Pro) + AMP + diphosphate. In terms of biological role, catalyzes the attachment of proline to tRNA(Pro) in a two-step reaction: proline is first activated by ATP to form Pro-AMP and then transferred to the acceptor end of tRNA(Pro). As ProRS can inadvertently accommodate and process non-cognate amino acids such as alanine and cysteine, to avoid such errors it has two additional distinct editing activities against alanine. One activity is designated as 'pretransfer' editing and involves the tRNA(Pro)-independent hydrolysis of activated Ala-AMP. The other activity is designated 'posttransfer' editing and involves deacylation of mischarged Ala-tRNA(Pro). The misacylated Cys-tRNA(Pro) is not edited by ProRS. This is Proline--tRNA ligase from Xanthomonas campestris pv. campestris (strain 8004).